The chain runs to 1891 residues: Endoribonuclease Dicer-L (1891 aa).

The Helicase ATP-binding domain occupies 41–217; sequence LLEAALDHNT…DLEEKIQKLE (177 aa). Residue 54–61 coordinates ATP; sequence LNSGSGKT. Residues 165–168 carry the DECH box motif; it reads DECH. One can recognise a Helicase C-terminal domain in the interval 425 to 594; that stretch reads SFPSPFTNIL…SIDCGNTESE (170 aa). The Dicer dsRNA-binding fold domain maps to 622 to 714; sequence AIGHINRYCA…MPVGKETVKY (93 aa). A PAZ domain is found at 887–1034; that stretch reads KFVEDIEKSE…LVPELCAIHP (148 aa). RNase III domains follow at residues 1248–1379 and 1635–1793; these read TSDM…ETSG and FENF…MDSG. Mg(2+) contacts are provided by Glu-1292, Asp-1370, Glu-1373, Glu-1674, Asp-1779, and Glu-1782. Positions 1818–1883 constitute a DRBM domain; that stretch reads VPRSPVRELL…ARRALRSLKA (66 aa).

This sequence belongs to the helicase family. Dicer subfamily. Component of the RISC loading complex (RLC), or micro-RNA (miRNA) loading complex (miRLC), which is composed of dicer1, ago2 and tarbp2; dicer1 and tarbp2 are required to process precursor miRNAs (pre-miRNAs) to mature miRNAs and then load them onto ago2. Note that the trimeric RLC/miRLC is also referred to as RISC. Mg(2+) is required as a cofactor. Mn(2+) serves as cofactor.

The protein resides in the cytoplasm. It catalyses the reaction Endonucleolytic cleavage to 5'-phosphomonoester.. Its function is as follows. Double-stranded RNA (dsRNA) endoribonuclease playing a central role in short dsRNA-mediated post-transcriptional gene silencing. Cleaves naturally occurring long dsRNAs and short hairpin pre-microRNAs (miRNA) into fragments of 21 to 23 nucleotides with 3' overhang of two nucleotides, producing respectively short interfering RNAs (siRNA) and mature microRNAs. SiRNAs and miRNAs serve as guide to direct the RNA-induced silencing complex (RISC) to complementary RNAs to degrade them or prevent their translation. Gene silencing mediated by siRNAs, also called RNA interference, controls the elimination of transcripts from mobile and repetitive DNA elements of the genome but also the degradation of exogenous RNA of viral origin for instance. The miRNA pathway on the other side is a mean to specifically regulate the expression of target genes. During embryonic development, at the left-right organizer, post-transcriptionally regulates the expression of dand5 in flow sensor cells. In post-flow stages, acts along with Bicc1 to repress dand5 mRNA translation and decay. Decreased Dand5 expression lifts repression of Nodal and defines leftness by induction of the lateral plate mesoderm Nodal signaling cascade. In Xenopus laevis (African clawed frog), this protein is Endoribonuclease Dicer-L (dicer1.L).